We begin with the raw amino-acid sequence, 870 residues long: Eukaryotic translation initiation factor 3 subunit C (870 aa).

Residues 1–92 (MSRFFRGDSS…GVKVVKSAKN (92 aa)) are disordered. A compositionally biased stretch (acidic residues) spans 14–54 (SSDEEEDLYSDDEEVQEQPEEESEEDDSEEDDDDDDSDSSS). A PCI domain is found at 608–782 (FHMHINLELL…SSIIFRKGVE (175 aa)). Residues 807 to 870 (TLETRTQGTA…ALGAAVGSRA (64 aa)) form a disordered region. Positions 824–844 (GRGGRGGNRGGRGGNRGGRGG) are enriched in gly residues.

It belongs to the eIF-3 subunit C family. Component of the eukaryotic translation initiation factor 3 (eIF-3) complex.

Its subcellular location is the cytoplasm. Component of the eukaryotic translation initiation factor 3 (eIF-3) complex, which is involved in protein synthesis of a specialized repertoire of mRNAs and, together with other initiation factors, stimulates binding of mRNA and methionyl-tRNAi to the 40S ribosome. The eIF-3 complex specifically targets and initiates translation of a subset of mRNAs involved in cell proliferation. In Sclerotinia sclerotiorum (strain ATCC 18683 / 1980 / Ss-1) (White mold), this protein is Eukaryotic translation initiation factor 3 subunit C (nip1).